Here is a 125-residue protein sequence, read N- to C-terminus: Ribonuclease VapC19 (125 aa).

The PINc domain occupies 3–122; the sequence is LIDTTIAVDH…RHFPMFPDLQ (120 aa). The Mg(2+) site is built by Asp-5 and Asp-93.

It belongs to the PINc/VapC protein family. Requires Mg(2+) as cofactor.

In terms of biological role, toxic component of a type II toxin-antitoxin (TA) system. An RNase. Its toxic effect is neutralized by coexpression with cognate antitoxin VapB19. This Mycobacterium tuberculosis (strain CDC 1551 / Oshkosh) protein is Ribonuclease VapC19.